The primary structure comprises 159 residues: 3-dehydroquinate dehydratase (159 aa).

The active-site Proton acceptor is Y31. The substrate site is built by N82, H88, and D95. Residue H109 is the Proton donor of the active site. Residues 110–111 (IS) and R120 each bind substrate.

This sequence belongs to the type-II 3-dehydroquinase family. In terms of assembly, homododecamer.

The catalysed reaction is 3-dehydroquinate = 3-dehydroshikimate + H2O. Its pathway is metabolic intermediate biosynthesis; chorismate biosynthesis; chorismate from D-erythrose 4-phosphate and phosphoenolpyruvate: step 3/7. Functionally, catalyzes a trans-dehydration via an enolate intermediate. The protein is 3-dehydroquinate dehydratase of Streptomyces avermitilis (strain ATCC 31267 / DSM 46492 / JCM 5070 / NBRC 14893 / NCIMB 12804 / NRRL 8165 / MA-4680).